Consider the following 353-residue polypeptide: Protein CEPU-1 (353 aa).

The first 28 residues, 1–28 (MAQAKMQHPVSWVIFAGMAALLLFQGVP), serve as a signal peptide directing secretion. Ig-like C2-type domains are found at residues 37–124 (PKAM…PKTS), 134–216 (PKIT…VKVT), and 220–314 (PPYI…ETTT). 3 N-linked (GlcNAc...) asparagine glycosylation sites follow: asparagine 42, asparagine 68, and asparagine 150. Cysteine 55 and cysteine 113 are disulfide-bonded. Intrachain disulfides connect cysteine 155-cysteine 199 and cysteine 241-cysteine 293. N-linked (GlcNAc...) asparagine glycans are attached at residues asparagine 282, asparagine 290, and asparagine 303. Serine 330 carries GPI-anchor amidated serine lipidation. The propeptide at 331 to 353 (GAWRRGSCAWLLALPLAQLARQF) is removed in mature form.

Belongs to the immunoglobulin superfamily. IgLON family. As to quaternary structure, interacts with NEGR1. Found on the dendrites, somata and axons of developing Purkinje cells. Undetectable on other neurons like Golgi or granule cells.

The protein localises to the cell membrane. In terms of biological role, it may be a cellular address molecule specific to Purkinje cells. It may represent a receptor or a subunit of a receptor complex. This is Protein CEPU-1 from Gallus gallus (Chicken).